A 128-amino-acid polypeptide reads, in one-letter code: Ferric uptake regulation protein homolog (128 aa).

The protein belongs to the Fur family.

The protein is Ferric uptake regulation protein homolog of Archaeoglobus fulgidus (strain ATCC 49558 / DSM 4304 / JCM 9628 / NBRC 100126 / VC-16).